The primary structure comprises 639 residues: Far upstream element-binding protein 1 (639 aa).

2 disordered regions span residues 1–27 (MADYSTVPPPSSGSAGGGGGGGVNDAF) and 40–88 (KIGG…LPPM). The residue at position 2 (alanine 2) is an N-acetylalanine. Gly residues predominate over residues 14 to 23 (SAGGGGGGGV). Phosphoserine occurs at positions 48 and 51. A compositionally biased stretch (basic and acidic residues) spans 61 to 73 (RPLEDGDQPDAKK). 3 KH domains span residues 95–159 (VMTE…KRLL), 180–246 (NAVQ…KEMV), and 270–334 (NEGI…AEII). At serine 135 the chain carries Phosphoserine. Threonine 148 is modified (phosphothreonine). Arginine 316, arginine 354, arginine 356, and arginine 358 each carry omega-N-methylarginine. A disordered region spans residues 341 to 360 (VQAGNPGGPGPGGRGRGRGQ). The span at 345-360 (NPGGPGPGGRGRGRGQ) shows a compositional bias: gly residues. Residues 371–438 (LQEFNFIVPT…QQIDYARQLI (68 aa)) enclose the KH 4 domain. At threonine 427 the chain carries Phosphothreonine. Disordered stretches follow at residues 442 to 527 (IGGP…GTDP) and 543 to 574 (QAQPPPAAPAGAPTTTQTNGQGDQQNPAPAGQ). A compositionally biased stretch (pro residues) spans 463–500 (PHGPPGPPGPGTPMGPYNPAPYNPGPPGPAPHGPPAPY). The segment covering 551 to 568 (PAGAPTTTQTNGQGDQQN) has biased composition (low complexity). Phosphoserine is present on serine 625.

Found in a complex with PUF60 and far upstream element (FUSE) DNA segment. Interacts with PUF60 and JTV1. Post-translationally, ubiquitinated. This targets the protein for proteasome-mediated degradation.

It localises to the nucleus. In terms of biological role, regulates MYC expression by binding to a single-stranded far-upstream element (FUSE) upstream of the MYC promoter. May act both as activator and repressor of transcription. This Rattus norvegicus (Rat) protein is Far upstream element-binding protein 1.